We begin with the raw amino-acid sequence, 299 residues long: Homoserine kinase (299 aa).

ATP is bound at residue proline 88–threonine 98.

It belongs to the GHMP kinase family. Homoserine kinase subfamily.

The protein localises to the cytoplasm. The enzyme catalyses L-homoserine + ATP = O-phospho-L-homoserine + ADP + H(+). The protein operates within amino-acid biosynthesis; L-threonine biosynthesis; L-threonine from L-aspartate: step 4/5. In terms of biological role, catalyzes the ATP-dependent phosphorylation of L-homoserine to L-homoserine phosphate. This is Homoserine kinase from Gloeobacter violaceus (strain ATCC 29082 / PCC 7421).